The primary structure comprises 890 residues: Pentatricopeptide repeat-containing protein At3g57430, chloroplastic (890 aa).

The N-terminal 44 residues, Met1–Val44, are a transit peptide targeting the chloroplast. PPR repeat units lie at residues Ser61–Pro95, Asp96–Val130, Ser132–Arg162, Asn163–Pro197, Ser198–Lys231, Asn235–Arg265, Asp266–Pro300, Asp301–Asp335, Asn337–Leu371, Trp372–Ser398, Asn404–Arg438, Asp439–Thr473, Trp474–Val504, Asn516–Thr550, Asp551–Lys581, Asn582–Pro616, Asn617–Pro652, and Ser653–Asp683. Residues Ala689–Gly764 are type E motif. Positions Asp765 to Arg795 are type E(+) motif. A type DYW motif region spans residues Lys796–Trp890.

It belongs to the PPR family. PCMP-H subfamily.

It localises to the plastid. The protein resides in the chloroplast. Involved in RNA editing events in chloroplasts. Required for the editing of a single site in ndhB and ndhF transcripts, which are two plastid-encoded subunits of the chloroplast NAD(P)H dehydrogenase (NDH) complex. Required for the editing of a single site in psbZ. Required for optimal activity of the NDH complex of the photosynthetic electron transport chain. The protein is Pentatricopeptide repeat-containing protein At3g57430, chloroplastic (PCMP-H81) of Arabidopsis thaliana (Mouse-ear cress).